Here is a 261-residue protein sequence, read N- to C-terminus: uncharacterized protein (261 aa).

A signal peptide spans 1–20; the sequence is MKIQVMLIIIFVGIFTICLA. 2 N-linked (GlcNAc...) asparagine; by host glycosylation sites follow: asparagine 22 and asparagine 27.

The protein localises to the secreted. This is an uncharacterized protein from Acanthamoeba polyphaga (Amoeba).